We begin with the raw amino-acid sequence, 533 residues long: Glucose-6-phosphate isomerase (533 aa).

Glu330 serves as the catalytic Proton donor. Catalysis depends on residues His359 and Lys461.

Belongs to the GPI family.

It localises to the cytoplasm. It catalyses the reaction alpha-D-glucose 6-phosphate = beta-D-fructose 6-phosphate. The protein operates within carbohydrate biosynthesis; gluconeogenesis. It functions in the pathway carbohydrate degradation; glycolysis; D-glyceraldehyde 3-phosphate and glycerone phosphate from D-glucose: step 2/4. Catalyzes the reversible isomerization of glucose-6-phosphate to fructose-6-phosphate. This is Glucose-6-phosphate isomerase from Prochlorococcus marinus (strain SARG / CCMP1375 / SS120).